A 205-amino-acid polypeptide reads, in one-letter code: Proteasome subunit beta type-3 (205 aa).

S2 is subject to N-acetylserine. N6-acetyllysine is present on K77.

It belongs to the peptidase T1B family. As to quaternary structure, the 26S proteasome consists of a 20S proteasome core and two 19S regulatory subunits. The 20S proteasome core is a barrel-shaped complex made of 28 subunits that are arranged in four stacked rings. The two outer rings are each formed by seven alpha subunits, and the two inner rings are formed by seven beta subunits. The proteolytic activity is exerted by three beta-subunits PSMB5, PSMB6 and PSMB7. As to expression, detected in liver (at protein level).

It is found in the cytoplasm. Its subcellular location is the nucleus. Its function is as follows. Non-catalytic component of the 20S core proteasome complex involved in the proteolytic degradation of most intracellular proteins. This complex plays numerous essential roles within the cell by associating with different regulatory particles. Associated with two 19S regulatory particles, forms the 26S proteasome and thus participates in the ATP-dependent degradation of ubiquitinated proteins. The 26S proteasome plays a key role in the maintenance of protein homeostasis by removing misfolded or damaged proteins that could impair cellular functions, and by removing proteins whose functions are no longer required. Associated with the PA200 or PA28, the 20S proteasome mediates ubiquitin-independent protein degradation. This type of proteolysis is required in several pathways including spermatogenesis (20S-PA200 complex) or generation of a subset of MHC class I-presented antigenic peptides (20S-PA28 complex). This is Proteasome subunit beta type-3 (Psmb3) from Mus musculus (Mouse).